The following is a 444-amino-acid chain: Glutamate-1-semialdehyde 2,1-aminomutase (444 aa).

Lys267 carries the post-translational modification N6-(pyridoxal phosphate)lysine.

It belongs to the class-III pyridoxal-phosphate-dependent aminotransferase family. HemL subfamily. In terms of assembly, homodimer. Pyridoxal 5'-phosphate is required as a cofactor.

The protein localises to the cytoplasm. It carries out the reaction (S)-4-amino-5-oxopentanoate = 5-aminolevulinate. It participates in porphyrin-containing compound metabolism; protoporphyrin-IX biosynthesis; 5-aminolevulinate from L-glutamyl-tRNA(Glu): step 2/2. The polypeptide is Glutamate-1-semialdehyde 2,1-aminomutase (Xylella fastidiosa (strain M12)).